Reading from the N-terminus, the 1098-residue chain is Sister-chromatid cohesion protein 3 (1098 aa).

The interval 1 to 68 (MEDSPQGLKR…RSRTHPPQQN (68 aa)) is disordered. A coiled-coil region spans residues 245-265 (RVDSLNKRLSVTHEQITTLED). Positions 275 to 360 (FVHRYRDIDN…QRFSNRMIEM (86 aa)) constitute an SCD domain. Coiled coils occupy residues 632 to 653 (KLKD…EVKD), 888 to 908 (LESL…GREE), and 1009 to 1032 (LETL…ANVR). Residues 1027–1077 (EAANVRRRGRPRKRPETERKRLFDEQSGSDEDESISGGSDREDKLDEDAPL) form a disordered region. Positions 1040-1050 (RPETERKRLFD) are enriched in basic and acidic residues.

It belongs to the SCC3 family. In terms of assembly, part of the cohesin complex. Interacts with DEK3. In terms of tissue distribution, expressed in roots, mature leaves, buds and seedlings.

The protein localises to the nucleus. Its subcellular location is the chromosome. In terms of biological role, essential component of cohesin complex, a complex required for the cohesion of sister chromatids after DNA replication. The cohesin complex apparently forms a large proteinaceous ring within which sister chromatids can be trapped. At anaphase, the complex is cleaved and dissociates from chromatin, allowing sister chromatids to segregate. The cohesin complex may also play a role in spindle pole assembly during mitosis. Required for centromere cohesion maintenance at anaphase I and for the monopolar orientation of the kinetochores during both male and female meiosis. Also involved in mitosis. In Arabidopsis thaliana (Mouse-ear cress), this protein is Sister-chromatid cohesion protein 3.